The primary structure comprises 497 residues: Pentatricopeptide repeat-containing protein At2g36240 (497 aa).

PPR repeat units lie at residues 156-186 (LEPI…MKRL), 192-226 (NVGV…RAKP), 227-261 (DVCT…GCEP), 262-296 (NVVS…GCRF), 297-331 (SEAT…RVLP), 332-366 (SEFD…GQTP), 367-401 (CFIA…GILP), 402-436 (DSVT…GYEP), and 437-471 (DETT…DMLP).

The protein belongs to the PPR family. P subfamily.

This is Pentatricopeptide repeat-containing protein At2g36240 from Arabidopsis thaliana (Mouse-ear cress).